We begin with the raw amino-acid sequence, 407 residues long: Semenogelin-2 (407 aa).

The N-terminal stretch at 1–23 is a signal peptide; the sequence is MKSIILFVLSLVLILEKQAAVMG. Disordered stretches follow at residues 25-60, 133-158, 173-192, and 272-407; these read KDGS…TKSK, GQAH…LSSQ, KEQA…GSQS, and NLNQ…NKIS. Polar residues-rich tracts occupy residues 31–40, 137–158, and 174–192; these read QLPSGSSQFP, CGTQ…LSSQ, and EQAS…GSQS. Positions 292-310 are enriched in basic and acidic residues; sequence RTEERQLNHGEKSVQKDVS. Positions 325–334 are enriched in polar residues; sequence KSQNQVTIHS. The segment covering 335-345 has biased composition (basic and acidic residues); the sequence is QDQEHGHKENK. Over residues 372–397 the composition is skewed to polar residues; the sequence is GSISIQTEEQIHGKSQNXVRIPSQAQ.

Belongs to the semenogelin family. Interacts with SERPINA5.

The protein localises to the secreted. Functionally, participates in the formation of a gel matrix (sperm coagulum) entrapping the accessory gland secretions and ejaculated spermatozoa. The protein is Semenogelin-2 (SEMG2) of Pan troglodytes (Chimpanzee).